The following is a 39-amino-acid chain: Metallocarboxypeptidase inhibitor (39 aa).

The residue at position 1 (Gln-1) is a Pyrrolidone carboxylic acid. Cystine bridges form between Cys-8/Cys-24, Cys-12/Cys-27, and Cys-18/Cys-34.

In terms of tissue distribution, highly concentrated in tubers. Closely related but distinct forms of MCPI are present in leaves, stems and buds.

In terms of biological role, may play a defensive role against insect attacks. Inhibits A.aegypti carboxypeptidase CPB1. This Solanum tuberosum (Potato) protein is Metallocarboxypeptidase inhibitor.